Reading from the N-terminus, the 148-residue chain is Large ribosomal subunit protein bL9 (148 aa).

This sequence belongs to the bacterial ribosomal protein bL9 family.

Functionally, binds to the 23S rRNA. The chain is Large ribosomal subunit protein bL9 from Desulfitobacterium hafniense (strain DSM 10664 / DCB-2).